Consider the following 587-residue polypeptide: MHRYRSHTCGELRASDVGSDVRLSGWLHNRRDLGGILFIDLRDHYGITQLVARPGTPAYEALDKVSKESTVRVDGKVVSRGTENVNPDLPTGEIEVEVSEVELLGAAAPLPFTINAEDGVNEERRLEYRFLDLRRERMHRNILLRTAVISAIRHKMTALGFNEMATPILSATSPEGARDFVVPSRLHPGKFYALPQAPQQFKQLLMISGFDRYFQIAPCFRDEDARADRSPGEFYQLDVEMSFVEQEDVFQPIEKLMTELFEEFGGGRHVTSPFPRIPFREAMLKYGSDKPDLRAQLELVDITDIFEGSEFKAFAGKHVRALPVPDVSGQTRKFFDGLGDYAVEQGAKGLAWVRVGEDGSLTGPIAKFLTEENVAELTKRLSLAPGHAVFFGAGEFDEVSKIMGAVRVEAAKRSGNFEENVFRFCWIVDFPMYEKDEDTGKIDFSHNPFSMPQGGLEALETQDPLDILGWQYDIVCNGVELSSGAIRNHEPEIMLKAFEIAGYDRDTVEEQFAGMLRAFRFGAPPHGGIAPGVDRIVMLLADEPNIRETIAFPLNGNAQDLMMGAPTELDETRLRELHLSVRKPQPK.

Glutamate 175 lines the L-aspartate pocket. The interval 199 to 202 (QQFK) is aspartate. Arginine 221 and histidine 446 together coordinate L-aspartate. Residue 221–223 (RDE) coordinates ATP. Glutamate 480 serves as a coordination point for ATP. Residue arginine 487 participates in L-aspartate binding. 532 to 535 (GVDR) is a binding site for ATP.

It belongs to the class-II aminoacyl-tRNA synthetase family. Type 1 subfamily. Homodimer.

It localises to the cytoplasm. It catalyses the reaction tRNA(Asp) + L-aspartate + ATP = L-aspartyl-tRNA(Asp) + AMP + diphosphate. In terms of biological role, catalyzes the attachment of L-aspartate to tRNA(Asp) in a two-step reaction: L-aspartate is first activated by ATP to form Asp-AMP and then transferred to the acceptor end of tRNA(Asp). The polypeptide is Aspartate--tRNA ligase (Streptomyces avermitilis (strain ATCC 31267 / DSM 46492 / JCM 5070 / NBRC 14893 / NCIMB 12804 / NRRL 8165 / MA-4680)).